A 1155-amino-acid polypeptide reads, in one-letter code: Alpha,alpha-trehalose-phosphate synthase [UDP-forming] 1 (1155 aa).

The tract at residues 56 to 94 is disordered; sequence LQRRRSVSSRGGSLRGSMDSLNDSGQNGAEDVIGVEDEE. Positions 63–72 are enriched in low complexity; the sequence is SSRGGSLRGS.

The protein in the N-terminal section; belongs to the glycosyltransferase 20 family. In the C-terminal section; belongs to the gob-1 trehalose phosphatase family.

It carries out the reaction D-glucose 6-phosphate + UDP-alpha-D-glucose = alpha,alpha-trehalose 6-phosphate + UDP + H(+). Functionally, catalyzes the production of trehalose from glucose-6-phosphate and UDP-alpha-D-glucose in a 2 step process. The sequence is that of Alpha,alpha-trehalose-phosphate synthase [UDP-forming] 1 (tps-1) from Aphelenchoides avenae (Mycophagous nematode worm).